The sequence spans 206 residues: Thymidylate kinase (206 aa).

10–17 (GNDGSGKS) is a binding site for ATP.

Belongs to the thymidylate kinase family.

It catalyses the reaction dTMP + ATP = dTDP + ADP. Phosphorylation of dTMP to form dTDP in both de novo and salvage pathways of dTTP synthesis. This Caldicellulosiruptor saccharolyticus (strain ATCC 43494 / DSM 8903 / Tp8T 6331) protein is Thymidylate kinase.